A 1160-amino-acid polypeptide reads, in one-letter code: DNA polymerase III subunit alpha (1160 aa).

The protein belongs to the DNA polymerase type-C family. DnaE subfamily. The DNA polymerase holoenzyme is a complex that contains 10 different types of subunits. These subunits are organized into 3 functionally essential subassemblies: the pol III core, the beta sliding clamp processivity factor and the clamp-loading complex. The pol III core (subunits alpha,epsilon and theta) contains the polymerase and the 3'-5' exonuclease proofreading activities. The polymerase is tethered to the template via the sliding clamp processivity factor. The clamp-loading complex assembles the beta processivity factor onto the primer template and plays a central role in the organization and communication at the replication fork. This complex contains delta, delta', psi and chi, and copies of either or both of two different DnaX proteins, gamma and tau. The composition of the holoenzyme is, therefore: (alpha,epsilon,theta)[2]-(gamma/tau)[3]-delta,delta', psi,chi-beta[4].

The protein resides in the cytoplasm. The catalysed reaction is DNA(n) + a 2'-deoxyribonucleoside 5'-triphosphate = DNA(n+1) + diphosphate. In terms of biological role, DNA polymerase III is a complex, multichain enzyme responsible for most of the replicative synthesis in bacteria. This DNA polymerase also exhibits 3' to 5' exonuclease activity. The alpha chain is the DNA polymerase. In Escherichia coli O157:H7, this protein is DNA polymerase III subunit alpha (dnaE).